The chain runs to 276 residues: Large ribosomal subunit protein uL2 (276 aa).

Disordered stretches follow at residues 34-55 (LQPLKNNAGRNNNGRITVRHQG) and 221-276 (RGSV…RRTK). The span at 37 to 48 (LKNNAGRNNNGR) shows a compositional bias: polar residues.

Belongs to the universal ribosomal protein uL2 family. Part of the 50S ribosomal subunit. Forms a bridge to the 30S subunit in the 70S ribosome.

One of the primary rRNA binding proteins. Required for association of the 30S and 50S subunits to form the 70S ribosome, for tRNA binding and peptide bond formation. It has been suggested to have peptidyltransferase activity; this is somewhat controversial. Makes several contacts with the 16S rRNA in the 70S ribosome. In Enterococcus faecalis (strain ATCC 700802 / V583), this protein is Large ribosomal subunit protein uL2.